Consider the following 578-residue polypeptide: Phosphoenolpyruvate-protein phosphotransferase (578 aa).

His-195 (tele-phosphohistidine intermediate) is an active-site residue. The phosphoenolpyruvate site is built by Arg-302 and Arg-338. Mg(2+) is bound by residues Glu-437 and Asp-461. Phosphoenolpyruvate is bound by residues 460–461 (ND) and Arg-471. Catalysis depends on Cys-508, which acts as the Proton donor.

Belongs to the PEP-utilizing enzyme family. Homodimer. Requires Mg(2+) as cofactor.

The protein resides in the cytoplasm. The enzyme catalyses L-histidyl-[protein] + phosphoenolpyruvate = N(pros)-phospho-L-histidyl-[protein] + pyruvate. In terms of biological role, general (non sugar-specific) component of the phosphoenolpyruvate-dependent sugar phosphotransferase system (sugar PTS). This major carbohydrate active-transport system catalyzes the phosphorylation of incoming sugar substrates concomitantly with their translocation across the cell membrane. Enzyme I transfers the phosphoryl group from phosphoenolpyruvate (PEP) to the phosphoryl carrier protein (HPr). This Geobacillus stearothermophilus (Bacillus stearothermophilus) protein is Phosphoenolpyruvate-protein phosphotransferase (ptsI).